The primary structure comprises 353 residues: Photosystem II D2 protein (353 aa).

The residue at position 2 (Thr-2) is an N-acetylthreonine. Phosphothreonine is present on Thr-2. The chain crosses the membrane as a helical span at residues 41-61; sequence CAYFALGGWFTGTTFVTSWYT. His-118 serves as a coordination point for chlorophyll a. A helical membrane pass occupies residues 125-141; that stretch reads GFMLRQFELARSVQLRP. Positions 130 and 143 each coordinate pheophytin a. The chain crosses the membrane as a helical span at residues 153–166; it reads VFVSVFLIYPLGQS. His-198 lines the chlorophyll a pocket. Residues 208-228 form a helical membrane-spanning segment; that stretch reads AALLCAIHGATVENTLFEDGD. His-215 and Phe-262 together coordinate a plastoquinone. His-215 provides a ligand contact to Fe cation. His-269 serves as a coordination point for Fe cation. Residues 279–295 form a helical membrane-spanning segment; that stretch reads GLWMSALGVVGLALNLR.

This sequence belongs to the reaction center PufL/M/PsbA/D family. As to quaternary structure, PSII is composed of 1 copy each of membrane proteins PsbA, PsbB, PsbC, PsbD, PsbE, PsbF, PsbH, PsbI, PsbJ, PsbK, PsbL, PsbM, PsbT, PsbX, PsbY, PsbZ, Psb30/Ycf12, at least 3 peripheral proteins of the oxygen-evolving complex and a large number of cofactors. It forms dimeric complexes. The D1/D2 heterodimer binds P680, chlorophylls that are the primary electron donor of PSII, and subsequent electron acceptors. It shares a non-heme iron and each subunit binds pheophytin, quinone, additional chlorophylls, carotenoids and lipids. There is also a Cl(-1) ion associated with D1 and D2, which is required for oxygen evolution. The PSII complex binds additional chlorophylls, carotenoids and specific lipids. serves as cofactor.

It is found in the plastid. Its subcellular location is the chloroplast thylakoid membrane. The catalysed reaction is 2 a plastoquinone + 4 hnu + 2 H2O = 2 a plastoquinol + O2. In terms of biological role, photosystem II (PSII) is a light-driven water:plastoquinone oxidoreductase that uses light energy to abstract electrons from H(2)O, generating O(2) and a proton gradient subsequently used for ATP formation. It consists of a core antenna complex that captures photons, and an electron transfer chain that converts photonic excitation into a charge separation. The D1/D2 (PsbA/PsbD) reaction center heterodimer binds P680, the primary electron donor of PSII as well as several subsequent electron acceptors. D2 is needed for assembly of a stable PSII complex. This Populus trichocarpa (Western balsam poplar) protein is Photosystem II D2 protein.